Here is a 460-residue protein sequence, read N- to C-terminus: MADNKLWGGRFAAKTAQSVEDYTESVSYDQNLYREDISGSQAHAKMLAEQGVLTAEEAEILVKGLDQVLEEIESGKFEWKKEMEDLHMNIESRLTEIVGPVGGKLHTGRSRNDQVATDFRLHVLRSLEAWKTALEKLIASFTAKADANREVLLPGYTHLQPAQPVSLAHHMLAYAWMFKRDHSRVVDCINRANVCPLGAAALAGTTYPLKPATSAKYLGMEDTFRNSLDAVSDRDFVMEAMFTGSLIMTHLSRICEELIIWANPCFGFIKLPDEFSTGSSIMPQKKNPDVCELMRGKTGRVYGDLFSLMTTCKGLPLAYNRDMQEDKEPFFDCDKTVHASVVIMADMMDAMGFNPANMESALKKGFLNATELADYLVGKGIPFREAHHITGSAVAKAEAESRGLEDMSLEELKTFSDKIEEDVFEVLSYEAAVRRRVSPGSTGPESVDSQIAELKAWLKK.

The protein belongs to the lyase 1 family. Argininosuccinate lyase subfamily.

The protein localises to the cytoplasm. It carries out the reaction 2-(N(omega)-L-arginino)succinate = fumarate + L-arginine. Its pathway is amino-acid biosynthesis; L-arginine biosynthesis; L-arginine from L-ornithine and carbamoyl phosphate: step 3/3. The protein is Argininosuccinate lyase of Maridesulfovibrio salexigens (strain ATCC 14822 / DSM 2638 / NCIMB 8403 / VKM B-1763) (Desulfovibrio salexigens).